The chain runs to 576 residues: MNYALLSNGITTALEKEGSIEWFPVPKFDSPSVFTKILDEDKGGYFLITPEKFNKVKQQYVEYSLILRTEFDDGNLILIDFLPLSLPAIIRLYEAKVPFNVEVKPLFNYGLVNAGTETRKDGIIYKNPESKEGLELLINGDYKIISPYRITVNSGKGYLYLLYSRDLRYGLFSQKGFVYSEPYEAYSKLLYYSRKELERARKPSIYENAFYRSLSVILGLIYKPSGGIIASPTTSIPEIVGDERNWDYRYVWVRDSSYAIEALVKANLLTHARRALDFLTNLLDPSSKSFDHPFYSVDGTPPPAEENLDWLSGFMNSKPVRIGNAAYLQIQMDIEGAYMNALYEYYKRTLDKDYISSIFWAVEAISDWVSSSWRGESTDIWEERGISRHYTHTKLMSWVALDRASKLAKDLGYNKLFEEWKSRANEIKIDILNNGVKDNHHFVRYYGGDEIDAALLTLPIYDFIPATDTLFMNTLKKIDEELRVADGLYLRYKKDFMGLAKNPFTLVTTWMARVYIRLKEFDRARWLLETLIKCNQDLGLIGEHVDPETCEARGNYPHLFPHSGMVLSILEFDEVR.

The protein belongs to the glycosyl hydrolase 15 family.

It catalyses the reaction alpha,alpha-trehalose + H2O = alpha-D-glucose + beta-D-glucose. Its pathway is glycan degradation; trehalose degradation; D-glucose from alpha,alpha-trehalose: step 1/1. Its function is as follows. Catalyzes the hydrolysis of alpha,alpha-trehalose into two molecules of D-glucose. The polypeptide is Trehalase 2 (treH2) (Sulfolobus acidocaldarius (strain ATCC 33909 / DSM 639 / JCM 8929 / NBRC 15157 / NCIMB 11770)).